Here is a 324-residue protein sequence, read N- to C-terminus: MPEQAIVIAMAVSFLITVVLSPLFIPFLRRLKFGQSIREEGPKSHQKKSGTPTMGGIMILLAIVATTLWITPKIAGLSTRTYLLLLVTVGYGVLGFLDDMIKVVMKRNLGLTSRQKFIGQLLIAAIFFAVYRQSGFSTVLHIPGADWSVDLGWAYGVLLLFMLVGGSNAVNLTDGLDGLLAGTAAIAFGAYAVLAWNQGQYDVAVFCVAVVGAVLGFLVFNAHPAKVFMGDTGSLALGGAIAAVAVLTKLELLLVIIGGVFVIETLSVIIQVASFKTTGRRVFRMSPLHHHYELVGWSEWRIVVTFWAVGLLFAMLGIYIEVWM.

10 helical membrane-spanning segments follow: residues 5–25 (AIVI…PLFI), 57–77 (IMIL…IAGL), 81–101 (TYLL…DDMI), 117–137 (FIGQ…SGFS), 147–167 (WSVD…VGGS), 176–196 (LDGL…VLAW), 203–223 (VAVF…FNAH), 227–247 (VFMG…VAVL), 250–270 (LELL…SVII), and 302–322 (IVVT…YIEV).

The protein belongs to the glycosyltransferase 4 family. MraY subfamily. The cofactor is Mg(2+).

Its subcellular location is the cell membrane. It carries out the reaction UDP-N-acetyl-alpha-D-muramoyl-L-alanyl-gamma-D-glutamyl-meso-2,6-diaminopimeloyl-D-alanyl-D-alanine + di-trans,octa-cis-undecaprenyl phosphate = di-trans,octa-cis-undecaprenyl diphospho-N-acetyl-alpha-D-muramoyl-L-alanyl-D-glutamyl-meso-2,6-diaminopimeloyl-D-alanyl-D-alanine + UMP. Its pathway is cell wall biogenesis; peptidoglycan biosynthesis. Its function is as follows. Catalyzes the initial step of the lipid cycle reactions in the biosynthesis of the cell wall peptidoglycan: transfers peptidoglycan precursor phospho-MurNAc-pentapeptide from UDP-MurNAc-pentapeptide onto the lipid carrier undecaprenyl phosphate, yielding undecaprenyl-pyrophosphoryl-MurNAc-pentapeptide, known as lipid I. This is Phospho-N-acetylmuramoyl-pentapeptide-transferase from Geobacillus kaustophilus (strain HTA426).